Consider the following 169-residue polypeptide: Glycine-rich RNA-binding protein 8 (169 aa).

Residues 6-84 (YRCFVGGLAW…RVITVNEAQS (79 aa)) enclose the RRM domain. Position 47 is an ADP-ribosylarginine; by HopU1 (Arg-47). A disordered region spans residues 80–99 (NEAQSRGSGGGGGGRGGSGG). Gly residues predominate over residues 86–99 (GSGGGGGGRGGSGG). The glycine-rich (GR) required for cell-to-cell movement stretch occupies residues 86-168 (GSGGGGGGRG…GGSYGGGGGG (83 aa)). The nuclear targeting sequence (M9) stretch occupies residues 95-143 (GGSGGGYRSGGGGGYSGGGGGGYSGGGGGGYERRSGGYGSGGGGGGRGY). Ser-103 is subject to Phosphoserine. Residues 130 to 169 (GGYGSGGGGGGRGYGGGGRREGGGYGGGDGGSYGGGGGGW) form a disordered region.

Belongs to the GR-RBP family. As to quaternary structure, interacts with TRN1. Binds to small phloem-mobile single-stranded RNAs (ss-sRNA, e.g. small interfering RNA (siRNA) and microRNA (miRNA)) in the phloeme exudate, including viral-derived sRNA (vsiRNA). Post-translationally, ADP-ribosylated by the Pseudomonas syringae type III effector HopU1. ADP-ribosylation reduces the ability of the protein to bind RNA. As to expression, ubiquitous.

The protein resides in the cytoplasm. It localises to the nucleus. Its subcellular location is the secreted. Functionally, plays a role in RNA transcription or processing during stress. Binds RNAs and DNAs sequence with a preference to single-stranded nucleic acids. Involved in mRNA alternative splicing of numerous targets by modulating splice site selection. Negatively regulates the circadian oscillations of its own transcript as well as RBG7 transcript. Forms an interlocked post-transcriptional negative feedback loop with the RBG7 autoregulatory circuit. Both proteins negatively autoregulate and reciprocally crossregulate by binding to their pre-mRNAs and promoting unproductive splicing coupled to degradation via the NMD pathway. Target of the Pseudomonas syringae type III effector HopU1. Mediates cell-to-cell trafficking of RNA interference (RNAi) signals (small RNAs (sRNA), e.g. small interfering RNA (siRNA) and microRNA (miRNA)) which regulate growth and development, as well as responses to environmental inputs, including pathogen attack; can compromise zucchini yellow mosaic virus (ZYMV) and tobacco rattle virus (TRV) infections at the early stage. The sequence is that of Glycine-rich RNA-binding protein 8 from Arabidopsis thaliana (Mouse-ear cress).